A 40-amino-acid chain; its full sequence is Photosystem II reaction center protein J (40 aa).

Residues 8–28 (IPLWIIGTVAGILVIGLVGIF) traverse the membrane as a helical segment.

This sequence belongs to the PsbJ family. PSII is composed of 1 copy each of membrane proteins PsbA, PsbB, PsbC, PsbD, PsbE, PsbF, PsbH, PsbI, PsbJ, PsbK, PsbL, PsbM, PsbT, PsbX, PsbY, PsbZ, Psb30/Ycf12, at least 3 peripheral proteins of the oxygen-evolving complex and a large number of cofactors. It forms dimeric complexes.

Its subcellular location is the plastid. It localises to the chloroplast thylakoid membrane. In terms of biological role, one of the components of the core complex of photosystem II (PSII). PSII is a light-driven water:plastoquinone oxidoreductase that uses light energy to abstract electrons from H(2)O, generating O(2) and a proton gradient subsequently used for ATP formation. It consists of a core antenna complex that captures photons, and an electron transfer chain that converts photonic excitation into a charge separation. This chain is Photosystem II reaction center protein J, found in Spinacia oleracea (Spinach).